The sequence spans 284 residues: Homeobox protein CDX-4 (284 aa).

2 disordered regions span residues 15 to 40 (PGTL…SPMP) and 120 to 155 (GGGT…SRHS). Positions 22–37 (GGDGTAGTGGTGGGGS) are enriched in gly residues. Positions 173–232 (KEKYRVVYTDHQRLELEKEFHCNRYITIQRKSELAVNLGLSERQVKIWFQNRRAKERKMI) form a DNA-binding region, homeobox. Positions 238–253 (QFENSGGSVQSDSDSI) are enriched in polar residues. Positions 238–259 (QFENSGGSVQSDSDSISPGELP) are disordered.

Belongs to the Caudal homeobox family.

The protein localises to the nucleus. The chain is Homeobox protein CDX-4 (CDX4) from Homo sapiens (Human).